Here is a 182-residue protein sequence, read N- to C-terminus: Crossover junction endodeoxyribonuclease RuvC (182 aa).

Catalysis depends on residues Asp-7, Glu-68, and Asp-141. Mg(2+) contacts are provided by Asp-7, Glu-68, and Asp-141.

This sequence belongs to the RuvC family. As to quaternary structure, homodimer which binds Holliday junction (HJ) DNA. The HJ becomes 2-fold symmetrical on binding to RuvC with unstacked arms; it has a different conformation from HJ DNA in complex with RuvA. In the full resolvosome a probable DNA-RuvA(4)-RuvB(12)-RuvC(2) complex forms which resolves the HJ. Requires Mg(2+) as cofactor.

It is found in the cytoplasm. The enzyme catalyses Endonucleolytic cleavage at a junction such as a reciprocal single-stranded crossover between two homologous DNA duplexes (Holliday junction).. Functionally, the RuvA-RuvB-RuvC complex processes Holliday junction (HJ) DNA during genetic recombination and DNA repair. Endonuclease that resolves HJ intermediates. Cleaves cruciform DNA by making single-stranded nicks across the HJ at symmetrical positions within the homologous arms, yielding a 5'-phosphate and a 3'-hydroxyl group; requires a central core of homology in the junction. The consensus cleavage sequence is 5'-(A/T)TT(C/G)-3'. Cleavage occurs on the 3'-side of the TT dinucleotide at the point of strand exchange. HJ branch migration catalyzed by RuvA-RuvB allows RuvC to scan DNA until it finds its consensus sequence, where it cleaves and resolves the cruciform DNA. The protein is Crossover junction endodeoxyribonuclease RuvC of Thermobifida fusca (strain YX).